Reading from the N-terminus, the 451-residue chain is Probable NADH dehydrogenase (451 aa).

41–71 (KLIILGCGWGSYSFLKNLNSIKYDITVISPR) contacts FAD. 199-236 (LSFVIVGGGATGIEFTSELNDFFSEDLSRLFPFVPVNE) contributes to the NAD(+) binding site.

Belongs to the NADH dehydrogenase family. Requires FAD as cofactor.

The catalysed reaction is a ubiquinone + NADH + 5 H(+)(in) = a ubiquinol + NAD(+) + 4 H(+)(out). The chain is Probable NADH dehydrogenase from Dictyostelium discoideum (Social amoeba).